The primary structure comprises 136 residues: Large ribosomal subunit protein uL16 (136 aa).

This sequence belongs to the universal ribosomal protein uL16 family. As to quaternary structure, part of the 50S ribosomal subunit.

Binds 23S rRNA and is also seen to make contacts with the A and possibly P site tRNAs. The chain is Large ribosomal subunit protein uL16 from Ehrlichia ruminantium (strain Gardel).